The primary structure comprises 425 residues: MKTPSQTHVLGLAHPPLPMVRLAFIGLGNRGVLTLQRYLQIEGVEIKALCEIREGNLVKAQKILREAGYPQPDGYTGPDGWKRMCERDDIDLVFICTDWLTHTPMAVYSMEHGKHVAIEVPAAMTVEECWKLVDTAEKTRQHCMMLENCCYDPFALTTLNMAQQGAFGEITHVEGAYIHDLRSIYFADESKGGFHNHWGKKYSIEHTGNPYPTHGLGPVCQILNIHRGDRMNYLVSLSSLQAGMTEYARKNFGADSPEARQKYLLGDMNTTLIQTVKGKSIMIQYNVVTPRPYSRLHTVCGTKGFAQKYPVPSIALEPDAGSPLEGKALEEIMERYKHPFTATFGTEAHRRNLPNEMNYVMDCRLIYCLRNGLPLDMDVYDAAEWSCITELSEQSVLNGSIPVEIPDFTRGAWKKCHISRTSDLY.

Residues 29 to 30, E51, 99 to 102, 119 to 120, and N148 each bind NAD(+); these read NR, WLTH, and EV. Y177 lines the substrate pocket. NAD(+)-binding positions include 194–198 and Y211; that span reads FHNHW. Substrate is bound by residues 211-214 and Y293; that span reads YPTH.

This sequence belongs to the Gfo/Idh/MocA family. Glycosyl hydrolase 109 subfamily. Requires NAD(+) as cofactor.

Glycosidase. The chain is Glycosyl hydrolase family 109 protein 2 from Bacteroides fragilis (strain YCH46).